A 97-amino-acid polypeptide reads, in one-letter code: Small ribosomal subunit protein uS19 (97 aa).

It belongs to the universal ribosomal protein uS19 family.

Protein S19 forms a complex with S13 that binds strongly to the 16S ribosomal RNA. This Pelagibacter ubique (strain HTCC1062) protein is Small ribosomal subunit protein uS19.